The following is a 425-amino-acid chain: UBX domain-containing protein 4 (425 aa).

The interval 224-257 (TPIPSLPSTPSSYQNLPSQSLTGESLPTVSNQEK) is disordered. Residues 236-254 (YQNLPSQSLTGESLPTVSN) show a composition bias toward polar residues. S338 bears the Phosphoserine mark. Positions 341 to 390 (PLPSSAIVKFDFGNGKSIVHEFSKDDNIETLRAFVASHLSPEESTSFQLT) constitute a UBX domain.

The protein localises to the cytoplasm. Its subcellular location is the nucleus. Functionally, involved in CDC48-dependent protein degradation through the ubiquitin/proteasome pathway. In Schizosaccharomyces pombe (strain 972 / ATCC 24843) (Fission yeast), this protein is UBX domain-containing protein 4 (ubx4).